Consider the following 106-residue polypeptide: uncharacterized protein (106 aa).

Transmembrane regions (helical) follow at residues 4–24, 27–47, and 78–98; these read LPVVIISIVLFFVLFFGIGFL, MLLRMSWIMAVIYPIVCLFII, and VLILVSGLAGAIVSGIAINML.

Its subcellular location is the cell membrane. This is an uncharacterized protein from Bacillus subtilis (strain 168).